We begin with the raw amino-acid sequence, 434 residues long: CCA tRNA nucleotidyltransferase 1, mitochondrial (434 aa).

Residues 1–41 (MQSVLYPWHRQVLRCSWSRLCLLKRYLFTMKLQSPEFQSLF) constitute a mitochondrion transit peptide. ATP-binding residues include Gly64 and Arg67. Gly64 and Arg67 together coordinate CTP. Residues Asp77 and Asp79 each coordinate Mg(2+). The ATP site is built by Arg151, Asp194, Arg197, Arg200, and Arg203. CTP-binding residues include Arg151, Asp194, Arg197, Arg200, and Arg203. Ser400 is modified (phosphoserine). Position 402 is an N6-acetyllysine (Lys402).

Belongs to the tRNA nucleotidyltransferase/poly(A) polymerase family. In terms of assembly, monomer, and homodimer. Requires Mg(2+) as cofactor.

It localises to the mitochondrion. The protein resides in the cytoplasm. It is found in the nucleus. It carries out the reaction a tRNA precursor + 2 CTP + ATP = a tRNA with a 3' CCA end + 3 diphosphate. The enzyme catalyses a tRNA with a 3' CCA end + 2 CTP + ATP = a tRNA with a 3' CCACCA end + 3 diphosphate. In terms of biological role, nucleotidyltransferase that catalyzes the addition and repair of the essential 3'-terminal CCA sequence in tRNAs, which is necessary for the attachment of amino acids to the 3' terminus of tRNA molecules, using CTP and ATP as substrates. tRNA 3'-terminal CCA addition is required both for tRNA processing and repair. Promotes tRNA repair and recycling downstream of the ribosome-associated quality control (RQC) pathway by mediating addition of the tRNA 3'-terminal CCA following cleavage by ANKZF1 and repair by ELAC1. Also involved in tRNA surveillance by mediating tandem CCA addition to generate a CCACCA at the 3' terminus of unstable tRNAs and tRNA-like transcripts. While stable tRNAs receive only 3'-terminal CCA, unstable tRNAs beginning with GG are marked with CCACCA and rapidly degraded. The structural flexibility of RNA controls the choice between CCA versus CCACCA addition: following the first CCA addition cycle, nucleotide-binding to the active site triggers a clockwise screw motion, producing torque on the RNA. This ejects stable RNAs, whereas unstable RNAs are refolded while bound to the enzyme and subjected to a second CCA catalytic cycle. This is CCA tRNA nucleotidyltransferase 1, mitochondrial (Trnt1) from Mus musculus (Mouse).